Reading from the N-terminus, the 110-residue chain is Putative caspase recruitment domain-containing protein 17P (110 aa).

The 91-residue stretch at 1 to 91 folds into the CARD domain; that stretch reads MADKVLKEKR…HLAGTLGLSA (91 aa).

Interacts with pro-CASP1. Ubiquitous.

Its subcellular location is the cytoplasm. Functionally, regulator of procaspase-1/CASP1 activation implicated in the regulation of the proteolytic maturation of pro-IL-1beta/IL1B and its release during inflammation. Inhibits the release of IL1B in response to LPS in monocytes. However, unlike CASP1, do not induce NF-kappa-B activation. In Homo sapiens (Human), this protein is Putative caspase recruitment domain-containing protein 17P (CARD17P).